A 545-amino-acid chain; its full sequence is Chaperonin GroEL (545 aa).

ATP is bound by residues 30–33 (TLGP), Lys51, 87–91 (DGTTT), Gly415, and Asp496.

The protein belongs to the chaperonin (HSP60) family. Forms a cylinder of 14 subunits composed of two heptameric rings stacked back-to-back. Interacts with the co-chaperonin GroES.

The protein resides in the cytoplasm. The catalysed reaction is ATP + H2O + a folded polypeptide = ADP + phosphate + an unfolded polypeptide.. In terms of biological role, together with its co-chaperonin GroES, plays an essential role in assisting protein folding. The GroEL-GroES system forms a nano-cage that allows encapsulation of the non-native substrate proteins and provides a physical environment optimized to promote and accelerate protein folding. This chain is Chaperonin GroEL, found in Chlorobaculum tepidum (strain ATCC 49652 / DSM 12025 / NBRC 103806 / TLS) (Chlorobium tepidum).